The sequence spans 119 residues: uncharacterized protein (119 aa).

This is an uncharacterized protein from Bacillus subtilis (strain 168).